Consider the following 111-residue polypeptide: Stress-response A/B barrel domain-containing protein At5g22580 (111 aa).

In terms of domain architecture, Stress-response A/B barrel spans phenylalanine 6–phenylalanine 98. 4 residues coordinate Mg(2+): valine 31, isoleucine 34, aspartate 35, and valine 37.

As to quaternary structure, homodimer. It depends on Mg(2+) as a cofactor.

Its function is as follows. Involved in stress response. This chain is Stress-response A/B barrel domain-containing protein At5g22580, found in Arabidopsis thaliana (Mouse-ear cress).